We begin with the raw amino-acid sequence, 520 residues long: Sensory neuron membrane protein 1 (520 aa).

At 1–5 (MKPKK) the chain is on the cytoplasmic side. The helical transmembrane segment at 6-26 (LGIIGGSLLAFGILICAIAFP) threads the bilayer. Residues 27–451 (PFLRSQVKKQ…KLKTVFKTIS (425 aa)) are Extracellular-facing. N-linked (GlcNAc...) asparagine glycans are attached at residues asparagine 64, asparagine 224, and asparagine 268. Intrachain disulfides connect cysteine 264–cysteine 329, cysteine 293–cysteine 348, and cysteine 331–cysteine 337. Residues 452–472 (IVGFMKWFTIVSGTCVSGAAA) form a helical membrane-spanning segment. The Cytoplasmic segment spans residues 473–520 (ALFFKNKDKNKLDITKVTPQKGEEKKWPNQMTISTIQSAAVPPNLDAD).

It belongs to the CD36 family.

Its subcellular location is the cell membrane. Functionally, plays an olfactory role that is not restricted to pheromone sensitivity. This chain is Sensory neuron membrane protein 1, found in Apis mellifera (Honeybee).